The sequence spans 125 residues: Holo-[acyl-carrier-protein] synthase (125 aa).

Positions 7 and 56 each coordinate Mg(2+).

The protein belongs to the P-Pant transferase superfamily. AcpS family. It depends on Mg(2+) as a cofactor.

Its subcellular location is the cytoplasm. It catalyses the reaction apo-[ACP] + CoA = holo-[ACP] + adenosine 3',5'-bisphosphate + H(+). Its function is as follows. Transfers the 4'-phosphopantetheine moiety from coenzyme A to a Ser of acyl-carrier-protein. The protein is Holo-[acyl-carrier-protein] synthase of Chlamydia muridarum (strain MoPn / Nigg).